Here is a 274-residue protein sequence, read N- to C-terminus: 2,3,4,5-tetrahydropyridine-2,6-dicarboxylate N-succinyltransferase (274 aa).

2 residues coordinate substrate: Arg-104 and Asp-141.

This sequence belongs to the transferase hexapeptide repeat family. Homotrimer.

The protein resides in the cytoplasm. It catalyses the reaction (S)-2,3,4,5-tetrahydrodipicolinate + succinyl-CoA + H2O = (S)-2-succinylamino-6-oxoheptanedioate + CoA. It functions in the pathway amino-acid biosynthesis; L-lysine biosynthesis via DAP pathway; LL-2,6-diaminopimelate from (S)-tetrahydrodipicolinate (succinylase route): step 1/3. This chain is 2,3,4,5-tetrahydropyridine-2,6-dicarboxylate N-succinyltransferase, found in Salmonella typhi.